A 558-amino-acid polypeptide reads, in one-letter code: Chaperonin GroEL 1 (558 aa).

ATP is bound by residues 29 to 32 (TLGP), 86 to 90 (DGTTT), Gly413, and Asp494.

Belongs to the chaperonin (HSP60) family. Forms a cylinder of 14 subunits composed of two heptameric rings stacked back-to-back. Interacts with the co-chaperonin GroES.

The protein resides in the cytoplasm. The catalysed reaction is ATP + H2O + a folded polypeptide = ADP + phosphate + an unfolded polypeptide.. In terms of biological role, together with its co-chaperonin GroES, plays an essential role in assisting protein folding. The GroEL-GroES system forms a nano-cage that allows encapsulation of the non-native substrate proteins and provides a physical environment optimized to promote and accelerate protein folding. The protein is Chaperonin GroEL 1 of Acaryochloris marina (strain MBIC 11017).